The sequence spans 463 residues: Argininosuccinate lyase (463 aa).

The protein belongs to the lyase 1 family. Argininosuccinate lyase subfamily.

The protein localises to the cytoplasm. It catalyses the reaction 2-(N(omega)-L-arginino)succinate = fumarate + L-arginine. Its pathway is amino-acid biosynthesis; L-arginine biosynthesis; L-arginine from L-ornithine and carbamoyl phosphate: step 3/3. This chain is Argininosuccinate lyase, found in Ruegeria pomeroyi (strain ATCC 700808 / DSM 15171 / DSS-3) (Silicibacter pomeroyi).